A 382-amino-acid chain; its full sequence is Pyrimidine monooxygenase RutA (382 aa).

Residues 68 to 69 (IK), Asn134, Glu143, 159 to 160 (RY), and Ser209 contribute to the FMN site.

The protein belongs to the NtaA/SnaA/DszA monooxygenase family. RutA subfamily.

The enzyme catalyses uracil + FMNH2 + NADH + O2 = (Z)-3-ureidoacrylate + FMN + NAD(+) + H2O + H(+). It carries out the reaction thymine + FMNH2 + NADH + O2 = (Z)-2-methylureidoacrylate + FMN + NAD(+) + H2O + H(+). Functionally, catalyzes the pyrimidine ring opening between N-3 and C-4 by an unusual flavin hydroperoxide-catalyzed mechanism, adding oxygen atoms in the process to yield ureidoacrylate peracid, that immediately reacts with FMN forming ureidoacrylate and FMN-N(5)-oxide. The FMN-N(5)-oxide reacts spontaneously with NADH to produce FMN. Requires the flavin reductase RutF to regenerate FMN in vivo. The sequence is that of Pyrimidine monooxygenase RutA from Escherichia coli (strain SE11).